The sequence spans 104 residues: Putative Fis-like DNA-binding protein (104 aa).

The H-T-H motif DNA-binding region spans 80-99 (QTKASELLGLNRGTLRKKLK).

It belongs to the transcriptional regulatory Fis family.

The chain is Putative Fis-like DNA-binding protein from Pseudomonas aeruginosa (strain ATCC 15692 / DSM 22644 / CIP 104116 / JCM 14847 / LMG 12228 / 1C / PRS 101 / PAO1).